We begin with the raw amino-acid sequence, 269 residues long: MNQMNPAFVMPDVQSTVDTRQIPIQRVGVKAVRHPLTVCTESGDVQPTVGVWNLDVRLPADQKGTHMSRFVALLEENRAPLTVERFRAMLASMLEKLEAEAGRIEVTFPYFVNKTAPVSGVQSLLDYEVTLAGESRNGDTRLFLKVLVPVTSLCPCSKKISQYGAHNQRSHVTIDAELAADLPVEALIRIAEEEASCELWGLLKRPDEKFVTERAYENPKFVEDLVRDVAQRLDADERVAAYVLEAENFESIHNHSAYALIERDKRQAA.

Belongs to the GTP cyclohydrolase IV family.

It carries out the reaction GTP + H2O = 7,8-dihydroneopterin 3'-triphosphate + formate + H(+). Its pathway is cofactor biosynthesis; 7,8-dihydroneopterin triphosphate biosynthesis; 7,8-dihydroneopterin triphosphate from GTP: step 1/1. Converts GTP to 7,8-dihydroneopterin triphosphate. This Burkholderia lata (strain ATCC 17760 / DSM 23089 / LMG 22485 / NCIMB 9086 / R18194 / 383) protein is GTP cyclohydrolase FolE2 2.